We begin with the raw amino-acid sequence, 391 residues long: Multidrug resistance protein MdtL (391 aa).

The Cytoplasmic portion of the chain corresponds to 1 to 3 (MSR). Residues 4 to 24 (FLICSFALVLLYPAGIDMYLV) form a helical membrane-spanning segment. The Periplasmic portion of the chain corresponds to 25–41 (GLPRIAADLNASEAQLH). A helical membrane pass occupies residues 42–62 (IAFSVYLAGMAAAMLFAGKVA). Over 63–68 (DRSGRK) the chain is Cytoplasmic. Residues 69–89 (PVAIPGAALFIIASVFCSLAE) traverse the membrane as a helical segment. Over 90 to 92 (TST) the chain is Periplasmic. A helical membrane pass occupies residues 93–113 (LFLAGRFLQGLGAGCCYVVAF). Residues 114 to 130 (AILRDTLDDRRRAKVLS) are Cytoplasmic-facing. A helical membrane pass occupies residues 131 to 151 (LLNGITCIIPVLAPVLGHLIM). The Periplasmic portion of the chain corresponds to 152–157 (LKFPWQ). Residues 158–178 (SLFWTMAIMGIAVLMLSLFIL) traverse the membrane as a helical segment. Topologically, residues 179–198 (KETRPAAPAASDKSRENSES) are cytoplasmic. The helical transmembrane segment at 199–221 (LLNRFFLSRVVITTLSVSVILTF) threads the bilayer. At 222 to 244 (VNTSPVLLMEIMGFERGEYATIM) the chain is on the periplasmic side. Residues 245–265 (ALTAGVSMTVSFSTPFALGIF) traverse the membrane as a helical segment. Over 266 to 268 (KPR) the chain is Cytoplasmic. The helical transmembrane segment at 269 to 289 (TLMITSQVLFLAAGITLAVSP) threads the bilayer. At 290 to 292 (SHA) the chain is on the periplasmic side. The helical transmembrane segment at 293–313 (ISLFGITLICAGFSVGFGVAM) threads the bilayer. The Cytoplasmic portion of the chain corresponds to 314–330 (SQALGPFSLRAGVASST). A helical transmembrane segment spans residues 331 to 351 (LGIAQVCGSSLWIWLAAVVGI). At 352–355 (GAWN) the chain is on the periplasmic side. The helical transmembrane segment at 356-376 (MLIGILIACSIVSLLLIMFVA) threads the bilayer. At 377 to 391 (PGRPVAAHEEIHHHA) the chain is on the cytoplasmic side.

Belongs to the major facilitator superfamily. DHA1 family. MdtL (TC 2.A.1.2.22) subfamily.

It localises to the cell inner membrane. The protein is Multidrug resistance protein MdtL of Shigella dysenteriae serotype 1 (strain Sd197).